A 281-amino-acid chain; its full sequence is Microtubule-associated protein RP/EB family member 3 (281 aa).

The 103-residue stretch at 14-116 (NLSRHDMLAW…FIQWFKKFFD (103 aa)) folds into the Calponin-homology (CH) domain. Disordered regions lie at residues 157–181 (VPQR…VAPP) and 260–281 (EGFA…QDEY). The segment covering 158–175 (PQRTSPTGPKNMQTSGRL) has biased composition (polar residues). Phosphoserine is present on residues Ser162 and Ser176. Residues 194 to 264 (GGHEADAQIL…LYATEEGFAP (71 aa)) form the EB1 C-terminal domain. An APC-binding region spans residues 217–260 (DGLEKERDFYFSKLRDIELICQEHESENSPVISGIIGILYATEE). Positions 217–281 (DGLEKERDFY…EHQQEDQDEY (65 aa)) are DCTN1-binding. Basic and acidic residues predominate over residues 272–281 (EHQQEDQDEY).

The protein belongs to the MAPRE family. Homodimer. Heterodimer with MAPRE1. Binds monomeric and polymerized GTP-bound tubulin. Interacts with DCTN1 and SRCIN1. Binds to the C-terminal domain of APC. Interacts (via C-terminus) with CLIP1. Interacts with SLAIN2. Interacts with SLAIN1. Interacts with APC2. Interacts with AKAP9. Interacts with PDE4DIP isoform 2/MMG8/SMYLE; this interaction is required for its recruitment to the Golgi apparatus.

It is found in the cytoplasm. It localises to the cytoskeleton. Plus-end tracking protein (+TIP) that binds to the plus-end of microtubules and regulates the dynamics of the microtubule cytoskeleton. Promotes microtubule growth. May be involved in spindle function by stabilizing microtubules and anchoring them at centrosomes. Also acts as a regulator of minus-end microtubule organization: interacts with the complex formed by AKAP9 and PDE4DIP, leading to recruit CAMSAP2 to the Golgi apparatus, thereby tethering non-centrosomal minus-end microtubules to the Golgi, an important step for polarized cell movement. Promotes elongation of CAMSAP2-decorated microtubule stretches on the minus-end of microtubules. The chain is Microtubule-associated protein RP/EB family member 3 (Mapre3) from Mus musculus (Mouse).